A 248-amino-acid polypeptide reads, in one-letter code: Kallikrein-12 (248 aa).

The first 17 residues, Met-1–Ala-17, serve as a signal peptide directing secretion. The region spanning Ile-22–Arg-246 is the Peptidase S1 domain. An N-linked (GlcNAc...) asparagine glycan is attached at Asn-24. 6 disulfides stabilise this stretch: Cys-28-Cys-161, Cys-47-Cys-63, Cys-133-Cys-235, Cys-140-Cys-206, Cys-172-Cys-186, and Cys-196-Cys-222. Residues His-62 and Asp-108 each act as charge relay system in the active site. N-linked (GlcNAc...) asparagine glycosylation occurs at Asn-163. Residue Ser-200 is the Charge relay system of the active site.

This sequence belongs to the peptidase S1 family. Kallikrein subfamily.

The protein resides in the secreted. In Homo sapiens (Human), this protein is Kallikrein-12 (KLK12).